The primary structure comprises 334 residues: MTESLDGIKERALREIASARDTETLQSVSVKYLGRKGAVTLFLRNLSQLPAEERPRAGQAANQVKQDLQAALDRATEQIAADSAAVDGIDVSLPGRPVSRGTLHPITRITRRICEIFGRMGFDVVEGPEIETDYYNFEALNIPKHHPARDMQDTFYISDNVVLRTHTSPTQPRVMEKTAPPLRIIAPGKVYRCDSDVTHTPMFHQVEGLMVDRNVSFGDLKGILTLFIHRMFDPETSLRFRPSYFPFTEPSAEVDIRCVACRGKGCRICSHTGWLEILGAGMVHPAVFEKAGYDTQAYTGFAFGMGVERIAMLKYNIDDTRKFFENDTRFLRQF.

E249 contributes to the Mg(2+) binding site.

Belongs to the class-II aminoacyl-tRNA synthetase family. Phe-tRNA synthetase alpha subunit type 1 subfamily. As to quaternary structure, tetramer of two alpha and two beta subunits. Mg(2+) is required as a cofactor.

The protein localises to the cytoplasm. The enzyme catalyses tRNA(Phe) + L-phenylalanine + ATP = L-phenylalanyl-tRNA(Phe) + AMP + diphosphate + H(+). This Desulfosudis oleivorans (strain DSM 6200 / JCM 39069 / Hxd3) (Desulfococcus oleovorans) protein is Phenylalanine--tRNA ligase alpha subunit.